Reading from the N-terminus, the 1244-residue chain is Putative late blight resistance protein homolog R1A-4 (1244 aa).

Coiled coils occupy residues 411–434 (RYSDSLAFLKNQLQVIQTEFESLQ) and 526–548 (PRMNEEIVGFKDVIENLRNQLLN). Residues 527–755 (RMNEEIVGFK…ECWEQVANDL (229 aa)) enclose the NB-ARC domain. Residue 560-567 (GMPGLGKT) participates in ATP binding. LRR repeat units lie at residues 978-1004 (LWNLETLILNRRSVVHKILLPSTVWDM), 1079-1103 (PIRLEILKLYRSNAFKAIPFCISAP), 1127-1150 (LKNLEVLKLYYVEFGDHREWKVSN), 1153-1178 (FPQLKILKLEDVSLMKWIVADDAFPN), and 1213-1237 (ESVVKSAMNIQETQVEDYQNTNFKL).

The protein belongs to the disease resistance NB-LRR family.

The protein resides in the cytoplasm. It localises to the membrane. Functionally, confers resistance to late blight (Phytophthora infestans) races carrying the avirulence gene Avr1. Resistance proteins guard the plant against pathogens that contain an appropriate avirulence protein via an indirect interaction with this avirulence protein. That triggers a defense system including the hypersensitive response, which restricts the pathogen growth. This chain is Putative late blight resistance protein homolog R1A-4 (R1A-4), found in Solanum demissum (Wild potato).